Here is a 404-residue protein sequence, read N- to C-terminus: Cysteine desulfurase IscS (404 aa).

Residues 75 to 76, Asn155, Gln183, and 203 to 205 each bind pyridoxal 5'-phosphate; these read AT and TSH. Residue Lys206 is modified to N6-(pyridoxal phosphate)lysine. Thr243 is a pyridoxal 5'-phosphate binding site. The active-site Cysteine persulfide intermediate is the Cys328. [2Fe-2S] cluster is bound at residue Cys328.

The protein belongs to the class-V pyridoxal-phosphate-dependent aminotransferase family. NifS/IscS subfamily. In terms of assembly, homodimer. Forms a heterotetramer with IscU, interacts with other sulfur acceptors. Pyridoxal 5'-phosphate is required as a cofactor.

The protein localises to the cytoplasm. The catalysed reaction is (sulfur carrier)-H + L-cysteine = (sulfur carrier)-SH + L-alanine. It functions in the pathway cofactor biosynthesis; iron-sulfur cluster biosynthesis. Master enzyme that delivers sulfur to a number of partners involved in Fe-S cluster assembly, tRNA modification or cofactor biosynthesis. Catalyzes the removal of elemental sulfur atoms from cysteine to produce alanine. Functions as a sulfur delivery protein for Fe-S cluster synthesis onto IscU, an Fe-S scaffold assembly protein, as well as other S acceptor proteins. This chain is Cysteine desulfurase IscS, found in Photobacterium profundum (strain SS9).